The following is a 147-amino-acid chain: Large ribosomal subunit protein bL21 (147 aa).

A disordered region spans residues 115 to 147 (KSIKVGKPTPKSSSKKEETVKKETKPKSEKSTN). Residues 128–147 (SKKEETVKKETKPKSEKSTN) show a composition bias toward basic and acidic residues.

It belongs to the bacterial ribosomal protein bL21 family. Part of the 50S ribosomal subunit. Contacts protein L20.

This protein binds to 23S rRNA in the presence of protein L20. The chain is Large ribosomal subunit protein bL21 from Prochlorococcus marinus (strain MIT 9215).